The chain runs to 327 residues: Phenylalanine--tRNA ligase alpha subunit (327 aa).

A Mg(2+)-binding site is contributed by Glu252.

Belongs to the class-II aminoacyl-tRNA synthetase family. Phe-tRNA synthetase alpha subunit type 1 subfamily. As to quaternary structure, tetramer of two alpha and two beta subunits. Mg(2+) is required as a cofactor.

It localises to the cytoplasm. It carries out the reaction tRNA(Phe) + L-phenylalanine + ATP = L-phenylalanyl-tRNA(Phe) + AMP + diphosphate + H(+). The protein is Phenylalanine--tRNA ligase alpha subunit of Klebsiella pneumoniae subsp. pneumoniae (strain ATCC 700721 / MGH 78578).